The sequence spans 452 residues: MSLGNVGINADYSWDAGERARLLQSPSVGTSPELRRLAGGTSPAGAVFIVVNAALGAGLLNFPAAFNAAGGITAAISLQLVLLLFIISGLVILAHCADACSERTYQEVVRGVCGRTAGVLCEVLIAVYTFGTCIAFFIIIGDQLDKLLGAMMHTTAESPVPWYADRKFTISVTGVLLILPLSLPREISVQRYASFLSVLGTCYVTVVVVVRCIWPDTTIPSHEISSSSSSWLAVFNAVPTICFGYQCHVSSVPVYGSMQQQDIRRWGYIVTIAMFIALCVYTGTGVCGFLLFGSDVDQDVLLSFPSDDIAVAVARAFIILCVLTSYPILHYCGRAVLEGLWLRFTSQEPGEEPSKERRRRVLQTVIWFLLTLLLALFIPDIGRVISLIGGLAACFIFIFPGLCLIHLKLSEIHEHKSKSWWALLSYGVIMVTIGTFIFGQTTTKAIFVDLVG.

11 consecutive transmembrane segments (helical) span residues 46-66 (AVFI…PAAF), 74-94 (AAIS…VILA), 120-140 (LCEV…FIII), 168-188 (FTIS…REIS), 195-215 (FLSV…CIWP), 234-256 (VFNA…PVYG), 272-292 (IAMF…FLLF), 309-329 (IAVA…YPIL), 361-381 (VLQT…IPDI), 385-405 (ISLI…LCLI), and 419-439 (SWWA…FIFG).

Belongs to the amino acid/polyamine transporter 2 family.

Its subcellular location is the lysosome membrane. The protein localises to the cell projection. It is found in the axon. The enzyme catalyses L-asparagine(in) + Na(+)(in) = L-asparagine(out) + Na(+)(out). The catalysed reaction is L-glutamine(in) + Na(+)(in) = L-glutamine(out) + Na(+)(out). Its function is as follows. Symporter that selectively cotransports sodium ions and amino acids, such as L-glutamine and L-asparagine from the lysosome into the cytoplasm and may participates in mTORC1 activation. The transport activity requires an acidic lysosomal lumen. The polypeptide is Sodium-coupled neutral amino acid transporter 7 (Xenopus laevis (African clawed frog)).